Consider the following 341-residue polypeptide: Uroporphyrinogen decarboxylase (341 aa).

Substrate-binding positions include 23–27, D73, Y148, S203, and H318; that span reads RQAGR.

It belongs to the uroporphyrinogen decarboxylase family. As to quaternary structure, homodimer.

The protein resides in the cytoplasm. It catalyses the reaction uroporphyrinogen III + 4 H(+) = coproporphyrinogen III + 4 CO2. It participates in porphyrin-containing compound metabolism; protoporphyrin-IX biosynthesis; coproporphyrinogen-III from 5-aminolevulinate: step 4/4. Functionally, catalyzes the decarboxylation of four acetate groups of uroporphyrinogen-III to yield coproporphyrinogen-III. In Brucella anthropi (strain ATCC 49188 / DSM 6882 / CCUG 24695 / JCM 21032 / LMG 3331 / NBRC 15819 / NCTC 12168 / Alc 37) (Ochrobactrum anthropi), this protein is Uroporphyrinogen decarboxylase.